The sequence spans 557 residues: 2-isopropylmalate synthase (557 aa).

The Pyruvate carboxyltransferase domain occupies proline 33–aspartate 307. Mg(2+) contacts are provided by aspartate 42, histidine 246, histidine 248, and asparagine 282. Residues alanine 439–alanine 557 form a regulatory domain region.

Belongs to the alpha-IPM synthase/homocitrate synthase family. LeuA type 2 subfamily. As to quaternary structure, homodimer. Mg(2+) serves as cofactor.

Its subcellular location is the cytoplasm. The catalysed reaction is 3-methyl-2-oxobutanoate + acetyl-CoA + H2O = (2S)-2-isopropylmalate + CoA + H(+). It functions in the pathway amino-acid biosynthesis; L-leucine biosynthesis; L-leucine from 3-methyl-2-oxobutanoate: step 1/4. Functionally, catalyzes the condensation of the acetyl group of acetyl-CoA with 3-methyl-2-oxobutanoate (2-ketoisovalerate) to form 3-carboxy-3-hydroxy-4-methylpentanoate (2-isopropylmalate). This is 2-isopropylmalate synthase from Pseudomonas putida (strain GB-1).